A 341-amino-acid chain; its full sequence is Glycerol-3-phosphate dehydrogenase [NAD(P)+] (341 aa).

3 residues coordinate NADPH: S13, W14, and K108. 3 residues coordinate sn-glycerol 3-phosphate: K108, G139, and S141. Residue A143 coordinates NADPH. The sn-glycerol 3-phosphate site is built by K194, D247, S257, R258, and N259. The Proton acceptor role is filled by K194. R258 provides a ligand contact to NADPH. V282 and E284 together coordinate NADPH.

It belongs to the NAD-dependent glycerol-3-phosphate dehydrogenase family.

Its subcellular location is the cytoplasm. The catalysed reaction is sn-glycerol 3-phosphate + NAD(+) = dihydroxyacetone phosphate + NADH + H(+). The enzyme catalyses sn-glycerol 3-phosphate + NADP(+) = dihydroxyacetone phosphate + NADPH + H(+). It participates in membrane lipid metabolism; glycerophospholipid metabolism. Catalyzes the reduction of the glycolytic intermediate dihydroxyacetone phosphate (DHAP) to sn-glycerol 3-phosphate (G3P), the key precursor for phospholipid synthesis. The sequence is that of Glycerol-3-phosphate dehydrogenase [NAD(P)+] from Lactococcus lactis subsp. lactis (strain IL1403) (Streptococcus lactis).